The sequence spans 117 residues: Fluoride-specific ion channel FluC 2 (117 aa).

The next 4 membrane-spanning stretches (helical) occupy residues 1-21 (MITI…RALI), 33-53 (IPIA…FMMG), 61-81 (MFPF…TLSS), and 94-114 (IRFV…CFYG). Na(+) contacts are provided by glycine 71 and threonine 74.

Belongs to the fluoride channel Fluc/FEX (TC 1.A.43) family.

The protein localises to the cell membrane. The catalysed reaction is fluoride(in) = fluoride(out). Na(+) is not transported, but it plays an essential structural role and its presence is essential for fluoride channel function. Functionally, fluoride-specific ion channel. Important for reducing fluoride concentration in the cell, thus reducing its toxicity. This chain is Fluoride-specific ion channel FluC 2, found in Staphylococcus epidermidis (strain ATCC 35984 / DSM 28319 / BCRC 17069 / CCUG 31568 / BM 3577 / RP62A).